The chain runs to 130 residues: MSVTQYYGTGRRKTSTARVFLRPGSGKITVNQTDLDSYFGRETARMVVRQPLELLGSIGNFDVFVTVKGGGPSGQAGAIRHGITRALIQYDEANRSPLRKAGYVTRDAREVERKKVGLRKARKRPQFSKR.

This sequence belongs to the universal ribosomal protein uS9 family.

The protein is Small ribosomal subunit protein uS9 of Hahella chejuensis (strain KCTC 2396).